The following is a 286-amino-acid chain: Bifunctional protein FolD (286 aa).

Residues Gly166–Ser168 and Ile232 contribute to the NADP(+) site.

It belongs to the tetrahydrofolate dehydrogenase/cyclohydrolase family. Homodimer.

The enzyme catalyses (6R)-5,10-methylene-5,6,7,8-tetrahydrofolate + NADP(+) = (6R)-5,10-methenyltetrahydrofolate + NADPH. It catalyses the reaction (6R)-5,10-methenyltetrahydrofolate + H2O = (6R)-10-formyltetrahydrofolate + H(+). It participates in one-carbon metabolism; tetrahydrofolate interconversion. Catalyzes the oxidation of 5,10-methylenetetrahydrofolate to 5,10-methenyltetrahydrofolate and then the hydrolysis of 5,10-methenyltetrahydrofolate to 10-formyltetrahydrofolate. This Vibrio parahaemolyticus serotype O3:K6 (strain RIMD 2210633) protein is Bifunctional protein FolD.